The primary structure comprises 510 residues: Histidine ammonia-lyase (510 aa).

Residues 143 to 145 constitute a cross-link (5-imidazolinone (Ala-Gly)); sequence ASG. Ser-144 is modified (2,3-didehydroalanine (Ser)).

It belongs to the PAL/histidase family. In terms of processing, contains an active site 4-methylidene-imidazol-5-one (MIO), which is formed autocatalytically by cyclization and dehydration of residues Ala-Ser-Gly.

The protein localises to the cytoplasm. It carries out the reaction L-histidine = trans-urocanate + NH4(+). It functions in the pathway amino-acid degradation; L-histidine degradation into L-glutamate; N-formimidoyl-L-glutamate from L-histidine: step 1/3. The protein is Histidine ammonia-lyase of Shewanella piezotolerans (strain WP3 / JCM 13877).